Here is a 441-residue protein sequence, read N- to C-terminus: tRNA (adenine(37)-N6)-methyltransferase (441 aa).

Positions Thr30–Asn168 constitute a TsaA-like domain. Residues Pro47 to Gln49, His90 to Lys91, Arg117, Leu127, and Ile148 to Thr151 contribute to the S-adenosyl-L-methionine site. Residues Gln179–Asp192 are compositionally biased toward polar residues. Disordered stretches follow at residues Gln179–Tyr231 and Ser264–Gly284.

This sequence belongs to the tRNA methyltransferase O family.

It carries out the reaction N(6)-L-threonylcarbamoyladenosine(37) in tRNA + S-adenosyl-L-methionine = N(6)-methyl,N(6)-L-threonylcarbamoyladenosine(37) in tRNA + S-adenosyl-L-homocysteine + H(+). S-adenosyl-L-methionine-dependent methyltransferase responsible for the addition of the methyl group in the formation of N6-methyl-N6-threonylcarbamoyladenosine at position 37 (m(6)t(6)A37) of the tRNA anticodon loop of tRNA(Ser)(GCU). The methyl group of m(6)t(6)A37 may improve the efficiency of the tRNA decoding ability. The polypeptide is tRNA (adenine(37)-N6)-methyltransferase (Homo sapiens (Human)).